Here is a 70-residue protein sequence, read N- to C-terminus: MLRQHQDSLLLRFAQGEEGHETTTQLSCLVCVDRVSHTVDIHLSDTKIAVRDSLQRRIQGGGGFHGLRIR.

In terms of biological role, component of a type I toxin-antitoxin (TA) system. Either this protein or sequences upstream of it are required for translation of downstream flmA; this could be translationally coupled to flmA. This Escherichia coli (strain K12) protein is Protein FlmC (flmC).